The sequence spans 174 residues: Crossover junction endodeoxyribonuclease RuvC (174 aa).

Residues Asp8, Glu67, and Asp139 contribute to the active site. 3 residues coordinate Mg(2+): Asp8, Glu67, and Asp139.

It belongs to the RuvC family. Homodimer which binds Holliday junction (HJ) DNA. The HJ becomes 2-fold symmetrical on binding to RuvC with unstacked arms; it has a different conformation from HJ DNA in complex with RuvA. In the full resolvosome a probable DNA-RuvA(4)-RuvB(12)-RuvC(2) complex forms which resolves the HJ. It depends on Mg(2+) as a cofactor.

It localises to the cytoplasm. The catalysed reaction is Endonucleolytic cleavage at a junction such as a reciprocal single-stranded crossover between two homologous DNA duplexes (Holliday junction).. Functionally, the RuvA-RuvB-RuvC complex processes Holliday junction (HJ) DNA during genetic recombination and DNA repair. Endonuclease that resolves HJ intermediates. Cleaves cruciform DNA by making single-stranded nicks across the HJ at symmetrical positions within the homologous arms, yielding a 5'-phosphate and a 3'-hydroxyl group; requires a central core of homology in the junction. The consensus cleavage sequence is 5'-(A/T)TT(C/G)-3'. Cleavage occurs on the 3'-side of the TT dinucleotide at the point of strand exchange. HJ branch migration catalyzed by RuvA-RuvB allows RuvC to scan DNA until it finds its consensus sequence, where it cleaves and resolves the cruciform DNA. This chain is Crossover junction endodeoxyribonuclease RuvC, found in Pseudomonas fluorescens (strain ATCC BAA-477 / NRRL B-23932 / Pf-5).